Here is a 1427-residue protein sequence, read N- to C-terminus: Tonsoku-like protein (1427 aa).

The tract at residues 1 to 21 (MTSTKEIKQLQKAKSKAQSSN) is disordered. Over residues 10–21 (LQKAKSKAQSSN) the composition is skewed to low complexity. 8 TPR repeats span residues 27 to 60 (ASLCNQLGEVYAKTGDYQAAIEEHRQELALSEIL), 67 to 100 (AVANRKIGECYAELGNIEAALKHQRLHLNLARSV), 107 to 147 (QRAL…VDER), 162 to 195 (ARLLLNLGCVYDGMKEPQRCSDLIRQSIYIAEKN), 202 to 235 (YRANFNLGSIHFRNGQHSRAMRCFEQSKECARKM), 242 to 275 (SECFHSIGKILLHLGDFSAARRSLKKAFCLGSQQ), 311 to 344 (LDLSEQLGDLYCKVGCYSKALEAYQTQLACAEAL), and 352 to 385 (AVIHVSLAATYTDLRQHHRAVEHYRQELQLRKGN). Positions 465–502 (LSLDQSEDEDEEDEVDNSEPLEDSDIQYSESDDEDLEG) are disordered. A compositionally biased stretch (acidic residues) spans 469 to 501 (QSEDEDEEDEVDNSEPLEDSDIQYSESDDEDLE). ANK repeat units follow at residues 522 to 551 (KGETVLHRACIEGNLKQVQYLIEQGHPVNV), 555 to 584 (CGWTPLHESCNYGHQEIVAFLLDRGANVND), and 591 to 620 (GGITPLHDTLSCGHFSVARLLVLRGASVTV). 3 disordered regions span residues 692 to 801 (PLLR…SESG), 865 to 922 (KKKR…KMNQ), and 941 to 961 (IMTQESDHIQEPAPPSHQAMP). Over residues 742-761 (DDSSSSDNPDSDCSLSPLRP) the composition is skewed to low complexity. Residues 773 to 783 (SPQEVPSSQEL) show a composition bias toward polar residues. Positions 871–880 (SEHNATRETT) are enriched in basic and acidic residues. Over residues 881–890 (SRSQNNSSTI) the composition is skewed to polar residues. Residues 899–910 (SCSSRGSLSLKK) are compositionally biased toward low complexity. LRR repeat units follow at residues 1113–1137 (QASLTELRISANRLNDELLPEMMAA), 1141–1168 (MPRLRVLDISANQITGEGLRKASDAFET), 1174–1197 (FPCLEELNLSMNPLGDGWTQALAS), 1234–1258 (TGNMRSVCLSHNALGSTGFELVLKT), 1293–1316 (DCPLTHLNLSGNGLTDHSVLLLAR), 1321–1346 (CPSLVSLDLSANPLVTSTGLHSLLNG), and 1377–1400 (SDHIRDLRLCSQSLNKLDQDALQQ).

The protein belongs to the Tonsoku family. Component of the MMS22L-TONSL complex. Binds histones, with a strong preference for histone H3.1 (histones H3.1 and H3-4/H3.1t).

It localises to the nucleus. The protein localises to the chromosome. Its subcellular location is the cytoplasm. In terms of biological role, component of the MMS22L-TONSL complex, a complex that promotes homologous recombination-mediated repair of double-strand breaks (DSBs) at stalled or collapsed replication forks. The MMS22L-TONSL complex is required to maintain genome integrity during DNA replication. It mediates the assembly of RAD51 filaments on single-stranded DNA (ssDNA): the MMS22L-TONSL complex is recruited to DSBs following histone replacement by histone chaperones and eviction of the replication protein A complex (RPA/RP-A) from DSBs. Following recruitment to DSBs, the TONSL-MMS22L complex promotes recruitment of RAD51 filaments and subsequent homologous recombination. Within the complex, TONSL acts as a histone reader, which recognizes and binds newly synthesized histones following their replacement by histone chaperones. In Danio rerio (Zebrafish), this protein is Tonsoku-like protein (tonsl).